Consider the following 188-residue polypeptide: Meiotically up-regulated gene 94 protein (188 aa).

It localises to the cytoplasm. Its subcellular location is the nucleus. Its function is as follows. Has a role in meiosis. In Schizosaccharomyces pombe (strain 972 / ATCC 24843) (Fission yeast), this protein is Meiotically up-regulated gene 94 protein (mug94).